The chain runs to 190 residues: dCTP deaminase (190 aa).

Residue 113–118 coordinates dCTP; that stretch reads KSTYAR. The active-site Proton donor/acceptor is Glu139. Residues Gln158, Tyr172, Lys181, and Gln182 each contribute to the dCTP site.

This sequence belongs to the dCTP deaminase family. As to quaternary structure, homotrimer.

It carries out the reaction dCTP + H2O + H(+) = dUTP + NH4(+). Its pathway is pyrimidine metabolism; dUMP biosynthesis; dUMP from dCTP (dUTP route): step 1/2. Functionally, catalyzes the deamination of dCTP to dUTP. The protein is dCTP deaminase of Chlamydia trachomatis serovar A (strain ATCC VR-571B / DSM 19440 / HAR-13).